The chain runs to 287 residues: Ventral anterior homeobox 1b (287 aa).

Residues 1 to 33 are compositionally biased toward basic and acidic residues; the sequence is MFEKTRDMDVRCNIEENGRISKPKDNKEIRESQ. The segment at 1-55 is disordered; it reads MFEKTRDMDVRCNIEENGRISKPKDNKEIRESQSKMPSTYPAPGSSEGCAKNKSS. The segment at residues 89–148 is a DNA-binding region (homeobox); the sequence is PKRTRTSFTAEQLYRLEMEFQRCQYVVGRERTELARQLNLSETQVKVWFQNRRTKQKKDQ.

It belongs to the EMX homeobox family.

It is found in the nucleus. In terms of biological role, involved in ventral eye development. In Xenopus laevis (African clawed frog), this protein is Ventral anterior homeobox 1b (vax1-b).